Here is a 124-residue protein sequence, read N- to C-terminus: Putative membrane protein insertion efficiency factor (124 aa).

The interval 1–24 (MHDPHGHAHTVRPPGRGRNWPGPW) is disordered. Over residues 12–24 (RPPGRGRNWPGPW) the composition is skewed to low complexity.

The protein belongs to the UPF0161 family.

The protein resides in the cell inner membrane. Its function is as follows. Could be involved in insertion of integral membrane proteins into the membrane. The sequence is that of Putative membrane protein insertion efficiency factor from Mesorhizobium japonicum (strain LMG 29417 / CECT 9101 / MAFF 303099) (Mesorhizobium loti (strain MAFF 303099)).